Consider the following 265-residue polypeptide: Shikimate dehydrogenase (NADP(+)) (265 aa).

Shikimate is bound by residues 15 to 17 (SLS) and threonine 62. The active-site Proton acceptor is the lysine 66. 2 residues coordinate shikimate: asparagine 87 and aspartate 102. NADP(+) is bound by residues 125 to 129 (GAGGA), 149 to 154 (NRTLEK), and leucine 209. Shikimate is bound at residue tyrosine 211. Position 233 (glycine 233) interacts with NADP(+).

Belongs to the shikimate dehydrogenase family. As to quaternary structure, homodimer.

It carries out the reaction shikimate + NADP(+) = 3-dehydroshikimate + NADPH + H(+). The protein operates within metabolic intermediate biosynthesis; chorismate biosynthesis; chorismate from D-erythrose 4-phosphate and phosphoenolpyruvate: step 4/7. Involved in the biosynthesis of the chorismate, which leads to the biosynthesis of aromatic amino acids. Catalyzes the reversible NADPH linked reduction of 3-dehydroshikimate (DHSA) to yield shikimate (SA). This is Shikimate dehydrogenase (NADP(+)) from Legionella pneumophila subsp. pneumophila (strain Philadelphia 1 / ATCC 33152 / DSM 7513).